A 413-amino-acid polypeptide reads, in one-letter code: MPRHETDCRYFANGYCSKGNTCTFTHDVATRNENICHFNLVGKCSYGRACRFLHTRPRNDELPSCSTPQTSQNQQNLQNSGQRVRPKQLPELKFNAQAAEFVPRWKMPQRGPVTSYAGAAASADHGESSSSFQSSHEQAQLMMCPYHQKSGDCNRQDMDCPFAHGNYCDMCQQWSLHPYNAELRKKHENECVANHTTEMERAFLLQKTEQKTCGICMENIFEKNLRFGILNGCQHCFCLDCIRQWRSKDQENVELATKTVRSCPECRQHSDYVIPSLFWVESGQEKDLLIEMYKENTKRKICKYYSNERSRGACPFGNKCFYKHQLPDGSIDPGEAPSSRRRPRLVDFLFDDNSDSDEETFRRFQEEHEEEQEELLRFVAETLPEADEESELFRQITEVLRHYQISGHRRGFQ.

2 C3H1-type zinc fingers span residues 2-29 and 30-57; these read PRHETDCRYFANGYCSKGNTCTFTHDVA and TRNENICHFNLVGKCSYGRACRFLHTRP. The tract at residues 61–85 is disordered; that stretch reads ELPSCSTPQTSQNQQNLQNSGQRVR. Residues 66-82 are compositionally biased toward low complexity; sequence STPQTSQNQQNLQNSGQ. A C3H1-type 3 zinc finger spans residues 138-167; it reads QAQLMMCPYHQKSGDCNRQDMDCPFAHGNY. Residues 213-267 form an RING-type zinc finger; that stretch reads CGICMENIFEKNLRFGILNGCQHCFCLDCIRQWRSKDQENVELATKTVRSCPECR. The C3H1-type 4 zinc finger occupies 296–327; it reads NTKRKICKYYSNERSRGACPFGNKCFYKHQLP.

Component of a complex at least containing lep-2, lin-28 and the long non-coding RNA lep-5, which mediates the degradation of lin-28. In terms of tissue distribution, expressed in seam, tail tip, and other hypodermal cells, head and tail neurons, the pharynx, intestine and the developing hermaphrodite somatic gonad. Not expressed in body wall muscle cells.

Its subcellular location is the cytoplasm. It carries out the reaction S-ubiquitinyl-[E2 ubiquitin-conjugating enzyme]-L-cysteine + [acceptor protein]-L-lysine = [E2 ubiquitin-conjugating enzyme]-L-cysteine + N(6)-ubiquitinyl-[acceptor protein]-L-lysine.. It participates in protein modification; protein ubiquitination. E3 ubiquitin ligase which catalyzes the covalent attachment of ubiquitin moieties onto substrate proteins. Promotes the larval to adult transition by binding to the long non-coding RNA lep-5 to target the heterochronic protein lin-28 for degradation by the proteasome. This association and degradation of lin-28 also controls the timing of the sexual differentiation of individual neurons in males including the AIM, AWA, ADF, ASJ and CEM neurons. Plays a role in governing the developmental timing of male tail tip morphogenesis. Plays a role in two aspects of male mating behavior: response to hermaphrodite contact and vulva location. May play a role in the detection of preferred food sources. The chain is E3 ubiquitin-protein ligase makorin from Caenorhabditis elegans.